Reading from the N-terminus, the 305-residue chain is Oxidoreductase swnR (305 aa).

It belongs to the NmrA-type oxidoreductase family. Isoflavone reductase subfamily.

It catalyses the reaction L-pipecolate + O2 = L-1-piperideine-6-carboxylate + H2O2 + H(+). Its pathway is mycotoxin biosynthesis. Oxidoreductase; part of the gene cluster that mediates the biosynthesis of swainsonine (SW), a cytotoxic fungal alkaloid and a potential cancer therapy drug. Swainsonine production occurs via a multibranched pathway and is dispensable for fungal colonization of plants and infection of insect hosts. The first step of swainsonine biosynthesis is the production of the precursor pipecolic acid (PA) via conversion of L-lysine (Lys) to 1-piperideine-6-carboxylate (P6C) by the aminotransferase swnA, the latter being further reduced to PA by the reductase swnR. PA can be converted from lysine by both the SW biosynthetic cluster and the unclustered genes such as lysine cyclodeaminase. The PKS-NRPS hybrid synthetase swnK uptakes and condensates PA and malonyl-CoA with and without skipping of the ketoreductase (KR) domain in order to produce 3 intermediates, 1-oxoindolizidine, (1S)-1-hydroxyindolizin, and (1R)-1-hydroxyindolizine; with the transisomer (1S)-1-hydroxyindolizin being predominant. The terminal thioester reductase (TE) domain of swnK is involved in reduction of the thioester bond to release the intermediate aldehydes. The oxidoreductase swnN could contribute to the reduction of 1-oxoindolizidine to (1S)-1-hydroxyindolizin and (1R)-1-hydroxyindolizine, contributing to the major route of SW production. The dioxygenase swnH2 would be responsible for the oxidization of (1R)-1-hydroxyindolizine into (1R,2S)-1,2-dihydroxyindolizine and of (1S)-1-hydroxyindolizin to yield both (1R,2S)-1,2-dihydroxyindolizine and (1S,2S)-1,2-dihydroxyindolizine. The dioxygenase swnH1 then performs the conversion of the 1,2-dihydroxyindolizine epimers to SW. The polypeptide is Oxidoreductase swnR (Metarhizium robertsii (strain ARSEF 23 / ATCC MYA-3075) (Metarhizium anisopliae (strain ARSEF 23))).